The sequence spans 957 residues: Protein CRT10 (957 aa).

The disordered stretch occupies residues N695–Q719. The span at T697–E710 shows a compositional bias: acidic residues. S704 is modified (phosphoserine).

Component of a cullin-RING ligase (CRL) composed of 4 subunits: the RING protein HRT1, the cullin RTT101, a linker protein MMS1, and the substrate receptor CRT10. Interacts with MMS1.

Substrate targeting component of a cullin-RING-based E3 ubiquitin-protein ligase complex RTT101(MMS1-CRT10). RTT101(MMS1-CRT10) may regulate nucleotide synthesis through transcriptional regulation of RNR genes encoding ribonucleotide reductases. The sequence is that of Protein CRT10 (CRT10) from Saccharomyces cerevisiae (strain ATCC 204508 / S288c) (Baker's yeast).